An 830-amino-acid chain; its full sequence is uncharacterized protein (830 aa).

3 disordered regions span residues 1–28, 70–147, and 186–210; these read MGVQ…DSIC, RRAN…GNFA, and AASP…SKSL. Residues 10–27 are compositionally biased toward polar residues; it reads NSKNWLRQPDQQPIQDSI. 2 stretches are compositionally biased toward low complexity: residues 100 to 130 and 186 to 199; these read QKSS…SIQS and AASP…ASTS. Residues 200–210 are compositionally biased toward polar residues; it reads ENLTPTSSKSL. Helical transmembrane passes span 505 to 525, 529 to 549, 551 to 571, 584 to 604, 622 to 642, 659 to 679, 691 to 711, 715 to 735, 740 to 760, and 802 to 822; these read WLVA…VYGG, DMLI…YINP, FFLF…FLGR, FCFA…YVVF, MLYA…GSAL, IIAV…LSLL, IQMF…LHFG, ISSA…SHFI, FAVV…AQGG, and IAIG…PFFG.

It belongs to the ThrE exporter (TC 2.A.79) family.

The protein localises to the cell membrane. It is found in the cell tip. This is an uncharacterized protein from Schizosaccharomyces pombe (strain 972 / ATCC 24843) (Fission yeast).